The primary structure comprises 152 residues: MIALIQRVKRADVRVGDRTTGEIGAGLLALVCAERGDNEAAADKLLAKLLGYRVFSDAAGKMNLPVSNIDGAGGAGGLLLVSQFTLAADTNSGLRPSFTPAAPPDEGARLFDYFVAAARERHPVVETGEFGADMQVSLVNDGPVTFWLQVRP.

The Gly-cisPro motif, important for rejection of L-amino acids motif lies at 142 to 143 (GP).

This sequence belongs to the DTD family. Homodimer.

Its subcellular location is the cytoplasm. It carries out the reaction glycyl-tRNA(Ala) + H2O = tRNA(Ala) + glycine + H(+). The catalysed reaction is a D-aminoacyl-tRNA + H2O = a tRNA + a D-alpha-amino acid + H(+). In terms of biological role, an aminoacyl-tRNA editing enzyme that deacylates mischarged D-aminoacyl-tRNAs. Also deacylates mischarged glycyl-tRNA(Ala), protecting cells against glycine mischarging by AlaRS. Acts via tRNA-based rather than protein-based catalysis; rejects L-amino acids rather than detecting D-amino acids in the active site. By recycling D-aminoacyl-tRNA to D-amino acids and free tRNA molecules, this enzyme counteracts the toxicity associated with the formation of D-aminoacyl-tRNA entities in vivo and helps enforce protein L-homochirality. The protein is D-aminoacyl-tRNA deacylase of Burkholderia ambifaria (strain ATCC BAA-244 / DSM 16087 / CCUG 44356 / LMG 19182 / AMMD) (Burkholderia cepacia (strain AMMD)).